A 344-amino-acid polypeptide reads, in one-letter code: Dimethyladenosine transferase 1, mitochondrial (344 aa).

Residues 1 to 27 constitute a mitochondrion transit peptide; sequence MATPGALAKFRLPPLPTIGEIVKLFNL. Residues Asn36, Leu38, Gly63, Glu85, Lys86, Asp111, Ile112, and Asn141 each coordinate S-adenosyl-L-methionine.

It belongs to the class I-like SAM-binding methyltransferase superfamily. rRNA adenine N(6)-methyltransferase family. KsgA subfamily.

The protein resides in the mitochondrion. The enzyme catalyses adenosine(N)/adenosine(N+1) in rRNA + 4 S-adenosyl-L-methionine = N(6)-dimethyladenosine(N)/N(6)-dimethyladenosine(N+1) in rRNA + 4 S-adenosyl-L-homocysteine + 4 H(+). Its function is as follows. Mitochondrial methyltransferase which uses S-adenosyl methionine to dimethylate two highly conserved adjacent adenosine residues (A1583 and A1584) within the loop of helix 45 at the 3-prime end of 12S rRNA, thereby regulating the assembly or stability of the small subunit of the mitochondrial ribosome. Also required for basal transcription of mitochondrial DNA, probably via its interaction with POLRMT and TFAM. Stimulates transcription independently of the methyltransferase activity. In Xenopus laevis (African clawed frog), this protein is Dimethyladenosine transferase 1, mitochondrial (tfb1m.L).